The following is a 1441-amino-acid chain: ABC transporter G family member 51 (1441 aa).

The segment at 52–71 (VLPDPDGLGGGDGGGRGEGQ) is disordered. A compositionally biased stretch (gly residues) spans 58-69 (GLGGGDGGGRGE). The ABC transporter 1 domain occupies 154–428 (LISSHLLRPD…FKSLGFSLPP (275 aa)). 187-194 (GPPASGKS) provides a ligand contact to ATP. Residues 505–718 (SLVRACFARE…AQRAVSVNEF (214 aa)) form the ABC transmembrane type-2 1 domain. The next 6 helical transmembrane spans lie at 523–543 (FLYTFRTCQVAFVGIITSTLF), 558–578 (LYLACLFFGLVHMMFNGFTEM), 615–635 (FIEAVVWSCVVYYTVGFAPTV), 642–662 (MLLLFSIHQMALGLFRMMGAI), 668–688 (IASTFGSAVLLAIFLLGGFVV), and 751–771 (FWIGVGVLLAYSIFFNIMFTL). The ABC transporter 2 domain occupies 838 to 1090 (MTFHNVNYYV…DMINYFQGIP (253 aa)). 883–890 (GASGSGKT) is an ATP binding site. One can recognise an ABC transmembrane type-2 2 domain in the interval 1163–1380 (TQFMVCLRKQ…TLRGVITSQL (218 aa)). 7 helical membrane passes run 1184–1204 (VVRLFFTSVAAIIFGSIFWNV), 1214–1234 (ILLLMGALYAACLFLGVNNAS), 1271–1291 (VEIPYIAVQTLIFGLITYFMV), 1300–1320 (LVLYLIYMFLTFTYFTFYGMV), 1330–1350 (MASVVSSAFYSLWNLLSGFLI), 1355–1375 (IPGWWIWFYYICPVAWTLRGV), and 1413–1433 (ATVAVLVAFSVFFFSIYAISI).

It belongs to the ABC transporter superfamily. ABCG family. PDR (TC 3.A.1.205) subfamily.

It localises to the membrane. In terms of biological role, may be a general defense protein. The sequence is that of ABC transporter G family member 51 from Oryza sativa subsp. japonica (Rice).